An 873-amino-acid polypeptide reads, in one-letter code: Leucine--tRNA ligase (873 aa).

The short motif at 41-51 (PYPSGRIHMGH) is the 'HIGH' region element. The 'KMSKS' region signature appears at 645–649 (KMSKS). Lys648 contacts ATP.

This sequence belongs to the class-I aminoacyl-tRNA synthetase family.

Its subcellular location is the cytoplasm. The enzyme catalyses tRNA(Leu) + L-leucine + ATP = L-leucyl-tRNA(Leu) + AMP + diphosphate. This chain is Leucine--tRNA ligase, found in Cereibacter sphaeroides (strain ATCC 17025 / ATH 2.4.3) (Rhodobacter sphaeroides).